Reading from the N-terminus, the 521-residue chain is MDSCCNFSLGTKTVLAKDSFKNVENKFLGEKIKGSVLKPFSSDLSSKKFRNRKLRPGVAYAIATSKNAKEALKNQPSMFERRRADPKNVAAIILGGGDGAKLFPLTKRAATPAVPVGGCYRMIDIPMSNCINSCINKIFVLTQFNSASLNRHLARTYFGNGINFGDGFVEVLAATQTPGEAGKKWFQGTADAVRKFLWVFEDAKNRNIENIIILSGDHLYRMNYMDFVQHHVDSKADITLSCAPVDESRASEYGLVNIDRSGRVVHFSEKPTGIDLKSMQTDTTMHGLSHQEAAKSPYIASMGVYCFKTEALLKLLTWRYPSSNDFGSEIIPAAIKDHNVQGYIYRDYWEDIGTIKSFYEANIALVEEHPKFEFYDQNTPFYTSPRFLPPTKTEKCRIVNSVISHGCFLGECSIQRSIIGERSRLDYGVELQDTLMLGADSYQTESEIASLLAEGNVPIGIGRDTKIRKCIIDKNAKIGKNVVIMNKDDVKEADRPEEGFYIRSGITVVVEKATIKDGTVI.

Residues 1-61 (MDSCCNFSLG…RKLRPGVAYA (61 aa)) constitute a chloroplast transit peptide.

The protein belongs to the bacterial/plant glucose-1-phosphate adenylyltransferase family. As to quaternary structure, heterotetramer. Probably are expressed in roots, flowers and/or seeds.

The protein localises to the plastid. It localises to the chloroplast. The enzyme catalyses alpha-D-glucose 1-phosphate + ATP + H(+) = ADP-alpha-D-glucose + diphosphate. Its pathway is glycan biosynthesis; starch biosynthesis. With respect to regulation, activated by 3'phosphoglycerate, inhibited by orthophosphate. Allosteric regulation. Functionally, this protein plays a role in synthesis of starch. It catalyzes the synthesis of the activated glycosyl donor, ADP-glucose from Glc-1-P and ATP. In Arabidopsis thaliana (Mouse-ear cress), this protein is Glucose-1-phosphate adenylyltransferase large subunit 3, chloroplastic (APL3).